Consider the following 146-residue polypeptide: Hydroxyproline-rich systemin (146 aa).

The first 24 residues, 1–24 (MISFFRAFFLIIIISFLIFVGAQA), serve as a signal peptide directing secretion. Residues 25 to 48 (RTLLGNYHDDEMLIELKLESGNYG) constitute a propeptide that is removed on maturation. The interval 47 to 128 (YGRTPYKTPP…PPPPKPQDEQ (82 aa)) is disordered. 6 positions are modified to 4-hydroxyproline: Pro51, Pro55, Pro56, Pro57, Pro58, and Pro63. O-linked (Ara...) hydroxyproline glycans are attached at residues Pro51, Pro55, Pro56, Pro57, Pro58, and Pro63. A propeptide spanning residues 67 to 70 (EIVN) is cleaved from the precursor. 4-hydroxyproline occurs at positions 79, 80, and 82. Residues Pro79, Pro80, and Pro82 are each glycosylated (O-linked (Ara...) hydroxyproline). Positions 86-110 (PIIGQLTTITTTPHHDDTVAAPPVG) are excised as a propeptide. Pro119, Pro120, Pro121, and Pro122 each carry 4-hydroxyproline. O-linked (Ara...) hydroxyproline glycans are attached at residues Pro119, Pro120, Pro121, and Pro122. A propeptide spanning residues 131-146 (IIITSSSSTLPLQASY) is cleaved from the precursor.

Post-translationally, O-glycosylated; contains pentose side chains. As to expression, leaves.

Its subcellular location is the secreted. Its function is as follows. Activates a lipid-based signal transduction pathway in which linolenic acid is converted to jasmonic acid, a potent activator of defense gene transcription. Induces synthesis of proteinase inhibitors I and II in leaves when supplied through cut stems. The protein is Hydroxyproline-rich systemin of Solanum lycopersicum (Tomato).